The primary structure comprises 456 residues: Argininosuccinate lyase (456 aa).

The protein belongs to the lyase 1 family. Argininosuccinate lyase subfamily.

Its subcellular location is the cytoplasm. It catalyses the reaction 2-(N(omega)-L-arginino)succinate = fumarate + L-arginine. The protein operates within amino-acid biosynthesis; L-arginine biosynthesis; L-arginine from L-ornithine and carbamoyl phosphate: step 3/3. In Shewanella pealeana (strain ATCC 700345 / ANG-SQ1), this protein is Argininosuccinate lyase.